Here is a 144-residue protein sequence, read N- to C-terminus: Putative pre-16S rRNA nuclease (144 aa).

The protein belongs to the YqgF nuclease family.

It is found in the cytoplasm. Its function is as follows. Could be a nuclease involved in processing of the 5'-end of pre-16S rRNA. The chain is Putative pre-16S rRNA nuclease from Pseudomonas paraeruginosa (strain DSM 24068 / PA7) (Pseudomonas aeruginosa (strain PA7)).